We begin with the raw amino-acid sequence, 328 residues long: tRNA(Ile)-lysidine synthase (328 aa).

35-40 contributes to the ATP binding site; that stretch reads SGGADS.

The protein belongs to the tRNA(Ile)-lysidine synthase family.

Its subcellular location is the cytoplasm. The catalysed reaction is cytidine(34) in tRNA(Ile2) + L-lysine + ATP = lysidine(34) in tRNA(Ile2) + AMP + diphosphate + H(+). Its function is as follows. Ligates lysine onto the cytidine present at position 34 of the AUA codon-specific tRNA(Ile) that contains the anticodon CAU, in an ATP-dependent manner. Cytidine is converted to lysidine, thus changing the amino acid specificity of the tRNA from methionine to isoleucine. This chain is tRNA(Ile)-lysidine synthase, found in Polaromonas naphthalenivorans (strain CJ2).